The sequence spans 60 residues: uncharacterized protein (60 aa).

Residues 19–39 form a helical membrane-spanning segment; the sequence is LSIMCGCSIYFLLLVFILTFY.

It is found in the membrane. This is an uncharacterized protein from Saccharomyces cerevisiae (strain ATCC 204508 / S288c) (Baker's yeast).